The chain runs to 400 residues: PHD finger protein 24 (400 aa).

Residue G2 is the site of N-myristoyl glycine attachment. The interval 30–108 (DRPSIRRTGE…FTPPAFIRPT (79 aa)) is disordered. Residue R36 is modified to Omega-N-methylarginine. The residue at position 43 (S43) is a Phosphoserine. At T47 the chain carries Phosphothreonine. A Phosphoserine modification is found at S51. Basic and acidic residues predominate over residues 78–97 (AWERLRDGRGVEPEEFDRTG). The segment at 129-190 (NDEMCDVCEV…TGWSCHYCDN (62 aa)) adopts a PHD-type zinc-finger fold.

This Pongo abelii (Sumatran orangutan) protein is PHD finger protein 24.